A 493-amino-acid chain; its full sequence is MADSKPLRTLDGDPVAVEALLRDVFGIVVDEAIRKGTNASEKVCEWKEPEELKQLLDLELQSQGESRERILERCRAVIHYSVKTGHPRFFNQLFSGLDPHALAGRIITESLNTSQYTYEIAPVFVLMEEEVLKKLRALVGWNTGDGVFCPGGSISNMYAINLARFQRYPDCKQRGLRALPPLALFTSKECHYSITKGAAFLGLGTDSVRVVKADERGKMIPEDLERQISLAEAEGSVPFLVSATSGTTVLGAFDPLDAIADVCQRHGLWLHVDAAWGGSVLLSRTHRHLLDGIQRADSVAWNPHKLLAAGLQCSALLLRDTSNLLKRCHGSQASYLFQQDKFYNVALDTGDKVVQCGRRVDCLKLWLMWKAQGGQGLEWRIDQAFALTRYLVEEIKKREGFELVMEPEFVNVCFWFVPPSLRGKKESPDYSQRLSQVAPVLKERMVKKGTMMIGYQPHGTRANFFRMVVANPILVQADIDFLLGELERLGQDL.

N6-(pyridoxal phosphate)lysine is present on K305.

It belongs to the group II decarboxylase family. As to quaternary structure, homodimer. Pyridoxal 5'-phosphate serves as cofactor. Expressed in brain, liver and kidney.

The catalysed reaction is L-aspartate + H(+) = beta-alanine + CO2. It catalyses the reaction 3-sulfino-L-alanine + H(+) = hypotaurine + CO2. The enzyme catalyses L-cysteate + H(+) = taurine + CO2. Its pathway is organosulfur biosynthesis; taurine biosynthesis; hypotaurine from L-cysteine: step 2/2. Functionally, catalyzes the decarboxylation of L-aspartate, 3-sulfino-L-alanine (cysteine sulfinic acid), and L-cysteate to beta-alanine, hypotaurine and taurine, respectively. The preferred substrate is 3-sulfino-L-alanine. Does not exhibit any decarboxylation activity toward glutamate. The polypeptide is Cysteine sulfinic acid decarboxylase (Csad) (Rattus norvegicus (Rat)).